Here is a 411-residue protein sequence, read N- to C-terminus: Ferrochelatase, mitochondrial (411 aa).

The N-terminal 41 residues, 1–41 (MAAFRAAHRLLGHILRNESSAGLVTQRWSSSAAVASVPKSS), are a transit peptide targeting the mitochondrion. A disordered region spans residues 34–55 (VASVPKSSDPKPHAQPDKRKPK). Basic and acidic residues predominate over residues 41–51 (SDPKPHAQPDK). Protoporphyrin IX-binding residues include Arg102, Tyr110, and Ser117. Cys183 provides a ligand contact to [2Fe-2S] cluster. Catalysis depends on residues His217 and Asp370. [2Fe-2S] cluster contacts are provided by Cys390, Cys393, and Cys398.

The protein belongs to the ferrochelatase family. As to quaternary structure, homodimer. Homotetramer. [2Fe-2S] cluster serves as cofactor.

It localises to the mitochondrion inner membrane. The enzyme catalyses heme b + 2 H(+) = protoporphyrin IX + Fe(2+). Its pathway is porphyrin-containing compound metabolism; protoheme biosynthesis; protoheme from protoporphyrin-IX: step 1/1. In terms of biological role, catalyzes the ferrous insertion into protoporphyrin IX. In Xenopus laevis (African clawed frog), this protein is Ferrochelatase, mitochondrial.